A 467-amino-acid polypeptide reads, in one-letter code: Uronate isomerase (467 aa).

This sequence belongs to the metallo-dependent hydrolases superfamily. Uronate isomerase family.

The enzyme catalyses D-glucuronate = D-fructuronate. The catalysed reaction is aldehydo-D-galacturonate = keto-D-tagaturonate. It functions in the pathway carbohydrate metabolism; pentose and glucuronate interconversion. This chain is Uronate isomerase, found in Histophilus somni (strain 2336) (Haemophilus somnus).